Consider the following 576-residue polypeptide: DM7 family protein GD16138 (576 aa).

Positions Phe-454–Lys-481 are disordered. A compositionally biased stretch (acidic residues) spans Leu-457 to Glu-478.

It belongs to the DM7 family.

This Drosophila simulans (Fruit fly) protein is DM7 family protein GD16138.